The sequence spans 155 residues: Low molecular weight phosphotyrosine protein phosphatase 1 (155 aa).

Residue cysteine 9 is the Nucleophile of the active site. Arginine 15 is a catalytic residue. Aspartate 124 functions as the Proton donor in the catalytic mechanism.

Belongs to the low molecular weight phosphotyrosine protein phosphatase family. Cone cells and primary pigment cells in developing pupal retina.

The protein resides in the cytoplasm. It carries out the reaction O-phospho-L-tyrosyl-[protein] + H2O = L-tyrosyl-[protein] + phosphate. The enzyme catalyses a phosphate monoester + H2O = an alcohol + phosphate. Its function is as follows. Acts on tyrosine phosphorylated proteins, low-MW aryl phosphates and natural and synthetic acyl phosphates. This Drosophila melanogaster (Fruit fly) protein is Low molecular weight phosphotyrosine protein phosphatase 1 (primo-1).